The sequence spans 510 residues: Maturase K (510 aa).

This sequence belongs to the intron maturase 2 family. MatK subfamily.

The protein localises to the plastid. Its subcellular location is the chloroplast. Its function is as follows. Usually encoded in the trnK tRNA gene intron. Probably assists in splicing its own and other chloroplast group II introns. The polypeptide is Maturase K (Anomochloa marantoidea (Herbaceous bamboo)).